The chain runs to 804 residues: Leucine--tRNA ligase (804 aa).

The short motif at 39-50 is the 'HIGH' region element; that stretch reads PFPSGKGLHVGH. Positions 573-577 match the 'KMSKS' region motif; sequence KMSKS. Lys-576 serves as a coordination point for ATP.

It belongs to the class-I aminoacyl-tRNA synthetase family.

The protein resides in the cytoplasm. The catalysed reaction is tRNA(Leu) + L-leucine + ATP = L-leucyl-tRNA(Leu) + AMP + diphosphate. In Lactobacillus gasseri (strain ATCC 33323 / DSM 20243 / BCRC 14619 / CIP 102991 / JCM 1131 / KCTC 3163 / NCIMB 11718 / NCTC 13722 / AM63), this protein is Leucine--tRNA ligase.